Here is a 248-residue protein sequence, read N- to C-terminus: Triosephosphate isomerase (248 aa).

A substrate-binding site is contributed by 9 to 11 (NWK). Residue histidine 94 is the Electrophile of the active site. Residue glutamate 166 is the Proton acceptor of the active site. Residues glycine 172, serine 211, and 232–233 (GG) contribute to the substrate site.

It belongs to the triosephosphate isomerase family. In terms of assembly, homodimer.

The protein resides in the cytoplasm. It carries out the reaction D-glyceraldehyde 3-phosphate = dihydroxyacetone phosphate. The protein operates within carbohydrate biosynthesis; gluconeogenesis. Its pathway is carbohydrate degradation; glycolysis; D-glyceraldehyde 3-phosphate from glycerone phosphate: step 1/1. In terms of biological role, involved in the gluconeogenesis. Catalyzes stereospecifically the conversion of dihydroxyacetone phosphate (DHAP) to D-glyceraldehyde-3-phosphate (G3P). This is Triosephosphate isomerase from Vesicomyosocius okutanii subsp. Calyptogena okutanii (strain HA).